An 834-amino-acid chain; its full sequence is Glycerol-3-phosphate acyltransferase (834 aa).

Residues 304–309 (CHRSHM) carry the HXXXXD motif motif. The segment at 800–834 (SVSMPAETSNQPEAPETPETPETPETPEPEGKTES) is disordered.

Belongs to the GPAT/DAPAT family.

The protein resides in the cell inner membrane. It catalyses the reaction sn-glycerol 3-phosphate + an acyl-CoA = a 1-acyl-sn-glycero-3-phosphate + CoA. Its pathway is phospholipid metabolism; CDP-diacylglycerol biosynthesis; CDP-diacylglycerol from sn-glycerol 3-phosphate: step 1/3. This Yersinia pseudotuberculosis serotype I (strain IP32953) protein is Glycerol-3-phosphate acyltransferase.